The sequence spans 348 residues: Dihydroorotase (348 aa).

Positions 17 and 19 each coordinate Zn(2+). Substrate-binding positions include 19-21 (HLR) and Asn45. Lys103, His140, and His178 together coordinate Zn(2+). Lys103 carries the post-translational modification N6-carboxylysine. Substrate is bound at residue His140. Residue Leu223 coordinates substrate. Asp251 is a Zn(2+) binding site. The active site involves Asp251. Substrate contacts are provided by His255 and Ala267.

It belongs to the metallo-dependent hydrolases superfamily. DHOase family. Class II DHOase subfamily. As to quaternary structure, homodimer. The cofactor is Zn(2+).

The enzyme catalyses (S)-dihydroorotate + H2O = N-carbamoyl-L-aspartate + H(+). It participates in pyrimidine metabolism; UMP biosynthesis via de novo pathway; (S)-dihydroorotate from bicarbonate: step 3/3. Functionally, catalyzes the reversible cyclization of carbamoyl aspartate to dihydroorotate. This Escherichia coli O7:K1 (strain IAI39 / ExPEC) protein is Dihydroorotase.